We begin with the raw amino-acid sequence, 196 residues long: Holliday junction resolvase RecU (196 aa).

Thr82, Asp84, Glu97, and Gln116 together coordinate Mg(2+).

This sequence belongs to the RecU family. It depends on Mg(2+) as a cofactor.

The protein resides in the cytoplasm. It carries out the reaction Endonucleolytic cleavage at a junction such as a reciprocal single-stranded crossover between two homologous DNA duplexes (Holliday junction).. Its function is as follows. Endonuclease that resolves Holliday junction intermediates in genetic recombination. Cleaves mobile four-strand junctions by introducing symmetrical nicks in paired strands. Promotes annealing of linear ssDNA with homologous dsDNA. Required for DNA repair, homologous recombination and chromosome segregation. This is Holliday junction resolvase RecU from Oceanobacillus iheyensis (strain DSM 14371 / CIP 107618 / JCM 11309 / KCTC 3954 / HTE831).